Reading from the N-terminus, the 363-residue chain is UDP-N-acetylglucosamine--N-acetylmuramyl-(pentapeptide) pyrophosphoryl-undecaprenol N-acetylglucosamine transferase (363 aa).

UDP-N-acetyl-alpha-D-glucosamine-binding positions include T14–G16, N122, R163, S190, and Q285.

Belongs to the glycosyltransferase 28 family. MurG subfamily.

The protein localises to the cell inner membrane. The enzyme catalyses di-trans,octa-cis-undecaprenyl diphospho-N-acetyl-alpha-D-muramoyl-L-alanyl-D-glutamyl-meso-2,6-diaminopimeloyl-D-alanyl-D-alanine + UDP-N-acetyl-alpha-D-glucosamine = di-trans,octa-cis-undecaprenyl diphospho-[N-acetyl-alpha-D-glucosaminyl-(1-&gt;4)]-N-acetyl-alpha-D-muramoyl-L-alanyl-D-glutamyl-meso-2,6-diaminopimeloyl-D-alanyl-D-alanine + UDP + H(+). Its pathway is cell wall biogenesis; peptidoglycan biosynthesis. Cell wall formation. Catalyzes the transfer of a GlcNAc subunit on undecaprenyl-pyrophosphoryl-MurNAc-pentapeptide (lipid intermediate I) to form undecaprenyl-pyrophosphoryl-MurNAc-(pentapeptide)GlcNAc (lipid intermediate II). This chain is UDP-N-acetylglucosamine--N-acetylmuramyl-(pentapeptide) pyrophosphoryl-undecaprenol N-acetylglucosamine transferase, found in Prochlorococcus marinus (strain AS9601).